A 304-amino-acid chain; its full sequence is Aspartate carbamoyltransferase catalytic subunit (304 aa).

Carbamoyl phosphate is bound by residues Arg49 and Thr50. Residue Lys77 participates in L-aspartate binding. The carbamoyl phosphate site is built by Arg99, His127, and Gln130. L-aspartate-binding residues include Arg160 and Arg211. 2 residues coordinate carbamoyl phosphate: Ala252 and Pro253.

It belongs to the aspartate/ornithine carbamoyltransferase superfamily. ATCase family. Heterododecamer (2C3:3R2) of six catalytic PyrB chains organized as two trimers (C3), and six regulatory PyrI chains organized as three dimers (R2).

It carries out the reaction carbamoyl phosphate + L-aspartate = N-carbamoyl-L-aspartate + phosphate + H(+). Its pathway is pyrimidine metabolism; UMP biosynthesis via de novo pathway; (S)-dihydroorotate from bicarbonate: step 2/3. In terms of biological role, catalyzes the condensation of carbamoyl phosphate and aspartate to form carbamoyl aspartate and inorganic phosphate, the committed step in the de novo pyrimidine nucleotide biosynthesis pathway. This is Aspartate carbamoyltransferase catalytic subunit from Bacillus cereus (strain ATCC 10987 / NRS 248).